A 761-amino-acid polypeptide reads, in one-letter code: Neutral ceramidase (761 aa).

The Cytoplasmic segment spans residues 1–11 (MAKRTFSSLEA). The helical; Signal-anchor for type II membrane protein transmembrane segment at 12–32 (FLIFLLVMMTAITVALLTLLF) threads the bilayer. At 33–761 (VTSGTIENHK…ISSPFEIVTT (729 aa)) the chain is on the lumenal side. A disordered region spans residues 43–76 (DSGNHWVSTTQGPTTTQSSPTTQTPTTQTPDLPP). Residues 50-76 (STTQGPTTTQSSPTTQTPTTQTPDLPP) are compositionally biased toward low complexity. Residues threonine 51, threonine 52, threonine 56, threonine 57, and threonine 58 are each glycosylated (O-linked (GalNAc...) threonine). 2 O-linked (GalNAc...) serine glycosylation sites follow: serine 60 and serine 61. 6 O-linked (GalNAc...) threonine glycosylation sites follow: threonine 63, threonine 64, threonine 66, threonine 68, threonine 69, and threonine 71. Leucine 115 is a Ca(2+) binding site. Histidine 175 is a Zn(2+) binding site. N-linked (GlcNAc...) asparagine glycosylation occurs at asparagine 198. A Zn(2+)-binding site is contributed by histidine 284. Serine 335 acts as the Nucleophile in catalysis. Disulfide bonds link cysteine 343-cysteine 357 and cysteine 350-cysteine 365. N-linked (GlcNAc...) asparagine glycans are attached at residues asparagine 412 and asparagine 449. An intrachain disulfide couples cysteine 429 to cysteine 479. Residues glutamate 521 and tyrosine 560 each contribute to the Zn(2+) site. Residues aspartate 693, serine 695, and threonine 698 each coordinate Ca(2+). The segment at 751 to 761 (GISSPFEIVTT) is required for correct folding and localization.

This sequence belongs to the neutral ceramidase family. It depends on Zn(2+) as a cofactor. Proteolytic cleavage of the N-terminus removes the signal-anchor and produces a soluble form of the protein. Post-translationally, N-glycosylated. Required for enzyme activity. In terms of processing, O-glycosylated. Required to retain it as a type II membrane protein at the cell surface. Phosphorylated. May prevent ubiquitination and subsequent degradation. Post-translationally, ubiquitinated, leading to its degradation by the proteasome. Ubiquitination is triggered by nitric oxide. As to expression, highly expressed in brain, kidney and heart. Expressed at lower level in other tissues such as liver. Expressed in intestine, kidney and liver (at protein level). Localizes in the epithelia of the jejunum and ileum.

It localises to the cell membrane. The protein localises to the membrane raft. It is found in the membrane. Its subcellular location is the caveola. The protein resides in the golgi apparatus membrane. It localises to the mitochondrion. The protein localises to the secreted. It is found in the extracellular exosome. The enzyme catalyses an N-acylsphing-4-enine + H2O = sphing-4-enine + a fatty acid. It catalyses the reaction N-hexadecanoylsphing-4-enine + H2O = sphing-4-enine + hexadecanoate. The catalysed reaction is N-tetradecanoylsphing-4-enine + H2O = tetradecanoate + sphing-4-enine. It carries out the reaction N-(9Z-octadecenoyl)-sphing-4-enine + H2O = sphing-4-enine + (9Z)-octadecenoate. The enzyme catalyses N-(15Z-tetracosenoyl)-sphing-4-enine + H2O = (15Z)-tetracosenoate + sphing-4-enine. It catalyses the reaction N-octanoylsphing-4-enine + H2O = octanoate + sphing-4-enine. The catalysed reaction is N-dodecanoylsphing-4-enine + H2O = dodecanoate + sphing-4-enine. It carries out the reaction N-(hexanoyl)sphing-4-enine + H2O = hexanoate + sphing-4-enine. The enzyme catalyses N-octadecanoylsphing-4-enine + H2O = sphing-4-enine + octadecanoate. It catalyses the reaction sphinganine + hexadecanoate = N-hexadecanoylsphinganine + H2O. The catalysed reaction is N-(octadecanoyl)-sphinganine + H2O = sphinganine + octadecanoate. The protein operates within lipid metabolism; sphingolipid metabolism. Its activity is regulated as follows. The reverse reaction is inhibited by Zn(2+) and Cu(2+). Inhibited by cardiolipin and phosphatidic acid. Plasma membrane ceramidase that hydrolyzes sphingolipid ceramides into sphingosine and free fatty acids at neutral pH. Ceramides, sphingosine, and its phosphorylated form sphingosine-1-phosphate are bioactive lipids that mediate cellular signaling pathways regulating several biological processes including cell proliferation, apoptosis and differentiation. Also catalyzes the reverse reaction allowing the synthesis of ceramides from fatty acids and sphingosine. Together with sphingomyelinase, participates in the production of sphingosine and sphingosine-1-phosphate from the degradation of sphingomyelin, a sphingolipid enriched in the plasma membrane of cells. Also participates in the hydrolysis of ceramides from the extracellular milieu allowing the production of sphingosine-1-phosphate inside and outside cells. This is the case for instance with the digestion of dietary sphingolipids in the intestinal tract. This chain is Neutral ceramidase (Asah2), found in Rattus norvegicus (Rat).